The sequence spans 341 residues: 4-hydroxy-2-oxovalerate aldolase 2 (341 aa).

Positions 8 to 260 (VTVHDMTLRD…ETGVDVAKIT (253 aa)) constitute a Pyruvate carboxyltransferase domain. 16–17 (RD) is a binding site for substrate. Asp17 contacts Mn(2+). Residue His20 is the Proton acceptor of the active site. The substrate site is built by Ser170 and His199. Mn(2+) contacts are provided by His199 and His201. Residue Tyr290 coordinates substrate.

This sequence belongs to the 4-hydroxy-2-oxovalerate aldolase family.

It catalyses the reaction (S)-4-hydroxy-2-oxopentanoate = acetaldehyde + pyruvate. This Dechloromonas aromatica (strain RCB) protein is 4-hydroxy-2-oxovalerate aldolase 2.